The sequence spans 800 residues: DNA topoisomerase 4 subunit A (800 aa).

One can recognise a Topo IIA-type catalytic domain in the interval 31–495; sequence LPDVRDGLKP…EIEEIKIDKE (465 aa). Residue Tyr119 is the O-(5'-phospho-DNA)-tyrosine intermediate of the active site.

It belongs to the type II topoisomerase GyrA/ParC subunit family. ParC type 2 subfamily. In terms of assembly, heterotetramer composed of ParC and ParE.

It localises to the cell membrane. It catalyses the reaction ATP-dependent breakage, passage and rejoining of double-stranded DNA.. Functionally, topoisomerase IV is essential for chromosome segregation. It relaxes supercoiled DNA. Performs the decatenation events required during the replication of a circular DNA molecule. This is DNA topoisomerase 4 subunit A from Staphylococcus aureus (strain N315).